A 484-amino-acid chain; its full sequence is Protein arginine methyltransferase NDUFAF7 homolog, mitochondrial (484 aa).

A mitochondrion-targeting transit peptide spans 1–12; the sequence is MFRSITQRVIRN.

It belongs to the NDUFAF7 family. Homodimer. Interacts with ndufs2.

The protein localises to the mitochondrion. The enzyme catalyses L-arginyl-[protein] + 2 S-adenosyl-L-methionine = N(omega),N(omega)'-dimethyl-L-arginyl-[protein] + 2 S-adenosyl-L-homocysteine + 2 H(+). Functionally, involved in the assembly or stability of mitochondrial NADH:ubiquinone oxidoreductase complex (complex I). Acts as an arginine methyltransferase and probably acts by mediating arginine methylation of ndufs2. The polypeptide is Protein arginine methyltransferase NDUFAF7 homolog, mitochondrial (Dictyostelium discoideum (Social amoeba)).